A 259-amino-acid chain; its full sequence is Triosephosphate isomerase (259 aa).

10 to 12 contributes to the substrate binding site; the sequence is NWK. Histidine 102 serves as the catalytic Electrophile. The active-site Proton acceptor is the glutamate 172. Residues glycine 178, serine 218, and 239–240 each bind substrate; that span reads GG.

Belongs to the triosephosphate isomerase family. In terms of assembly, homodimer.

It localises to the cytoplasm. The catalysed reaction is D-glyceraldehyde 3-phosphate = dihydroxyacetone phosphate. It functions in the pathway carbohydrate biosynthesis; gluconeogenesis. Its pathway is carbohydrate degradation; glycolysis; D-glyceraldehyde 3-phosphate from glycerone phosphate: step 1/1. Involved in the gluconeogenesis. Catalyzes stereospecifically the conversion of dihydroxyacetone phosphate (DHAP) to D-glyceraldehyde-3-phosphate (G3P). The polypeptide is Triosephosphate isomerase (Leifsonia xyli subsp. xyli (strain CTCB07)).